The following is a 318-amino-acid chain: Galactinol synthase 1 (318 aa).

Lys-102 is an active-site residue. Residues Asp-118, Asp-120, and His-244 each contribute to the Mn(2+) site.

It belongs to the glycosyltransferase 8 family. Galactosyltransferase subfamily. A divalent metal cation serves as cofactor. As to expression, expressed in seeds, mostly in radicle tips.

The protein resides in the cytoplasm. It carries out the reaction myo-inositol + UDP-alpha-D-galactose = alpha-D-galactosyl-(1-&gt;3)-1D-myo-inositol + UDP + H(+). Functionally, galactinol synthase involved in the biosynthesis of raffinose family oligosaccharides (RFOs) that function as osmoprotectants. May promote plant stress tolerance. This is Galactinol synthase 1 (GOLS1) from Solanum lycopersicum (Tomato).